Consider the following 111-residue polypeptide: UPF0060 membrane protein XCC2880 (111 aa).

The next 4 membrane-spanning stretches (helical) occupy residues 8 to 28, 34 to 54, 62 to 82, and 91 to 111; these read LLLF…PYLW, SVWL…LLTL, VYAA…WWVD, and LLGA…PRSG.

The protein belongs to the UPF0060 family.

The protein resides in the cell inner membrane. This Xanthomonas campestris pv. campestris (strain ATCC 33913 / DSM 3586 / NCPPB 528 / LMG 568 / P 25) protein is UPF0060 membrane protein XCC2880.